A 122-amino-acid polypeptide reads, in one-letter code: Large ribosomal subunit protein uL14 (122 aa).

This sequence belongs to the universal ribosomal protein uL14 family. Part of the 50S ribosomal subunit. Forms a cluster with proteins L3 and L19. In the 70S ribosome, L14 and L19 interact and together make contacts with the 16S rRNA in bridges B5 and B8.

In terms of biological role, binds to 23S rRNA. Forms part of two intersubunit bridges in the 70S ribosome. This Borreliella burgdorferi (strain ATCC 35210 / DSM 4680 / CIP 102532 / B31) (Borrelia burgdorferi) protein is Large ribosomal subunit protein uL14.